Consider the following 398-residue polypeptide: Stabilizer of axonemal microtubules 2 (398 aa).

Mn regions lie at residues Ser114–Ile126, Ile148–Leu162, Asn248–Ala260, Lys282–Arg296, Leu316–Leu328, and Val350–Ile364.

It belongs to the FAM154 family.

The protein is Stabilizer of axonemal microtubules 2 (SAXO2) of Homo sapiens (Human).